The primary structure comprises 274 residues: Malonyl-[acyl-carrier protein] O-methyltransferase (274 aa).

The protein belongs to the methyltransferase superfamily.

It catalyses the reaction malonyl-[ACP] + S-adenosyl-L-methionine = malonyl-[ACP] methyl ester + S-adenosyl-L-homocysteine. Its pathway is cofactor biosynthesis; biotin biosynthesis. Functionally, converts the free carboxyl group of a malonyl-thioester to its methyl ester by transfer of a methyl group from S-adenosyl-L-methionine (SAM). It allows to synthesize pimeloyl-ACP via the fatty acid synthetic pathway. This is Malonyl-[acyl-carrier protein] O-methyltransferase from Bacteroides helcogenes (strain ATCC 35417 / DSM 20613 / JCM 6297 / CCUG 15421 / P 36-108).